Reading from the N-terminus, the 667-residue chain is Mediator of RNA polymerase II transcription subunit 17 (667 aa).

Residues 172 to 197 (KRRALQEAVQVLDMAQKQRQRASSNL) are a coiled coil.

This sequence belongs to the Mediator complex subunit 17 family. As to quaternary structure, component of the Mediator complex.

The protein localises to the nucleus. Component of the Mediator complex, a coactivator involved in regulated gene transcription of nearly all RNA polymerase II-dependent genes. Mediator functions as a bridge to convey information from gene-specific regulatory proteins to the basal RNA polymerase II transcription machinery. Mediator is recruited to promoters by direct interactions with regulatory proteins and serves as a scaffold for the assembly of a functional preinitiation complex with RNA polymerase II and the general transcription factors. This chain is Mediator of RNA polymerase II transcription subunit 17 (mdt-17), found in Caenorhabditis elegans.